A 202-amino-acid chain; its full sequence is dITP/XTP pyrophosphatase (202 aa).

A substrate-binding site is contributed by 7–12; the sequence is TTNEGK. Glu37 and Asp66 together coordinate Mg(2+). The active-site Proton acceptor is the Asp66. Residues Ser67, 155 to 158, Lys178, and 183 to 184 contribute to the substrate site; these read FGYD and HR.

Belongs to the HAM1 NTPase family. As to quaternary structure, homodimer. The cofactor is Mg(2+).

It catalyses the reaction XTP + H2O = XMP + diphosphate + H(+). It carries out the reaction dITP + H2O = dIMP + diphosphate + H(+). The catalysed reaction is ITP + H2O = IMP + diphosphate + H(+). In terms of biological role, pyrophosphatase that catalyzes the hydrolysis of nucleoside triphosphates to their monophosphate derivatives, with a high preference for the non-canonical purine nucleotides XTP (xanthosine triphosphate), dITP (deoxyinosine triphosphate) and ITP. Seems to function as a house-cleaning enzyme that removes non-canonical purine nucleotides from the nucleotide pool, thus preventing their incorporation into DNA/RNA and avoiding chromosomal lesions. This chain is dITP/XTP pyrophosphatase, found in Aquifex aeolicus (strain VF5).